Reading from the N-terminus, the 648-residue chain is Probable LRR receptor-like serine/threonine-protein kinase At4g30520 (648 aa).

An N-terminal signal peptide occupies residues Met1 to Ser30. The Extracellular segment spans residues Ser31–Leu238. N-linked (GlcNAc...) asparagine glycans are attached at residues Asn99 and Asn112. 4 LRR repeats span residues Leu100 to Pro125, Leu127 to Leu148, Ser149 to Ile172, and His174 to Val199. Asn158 and Asn184 each carry an N-linked (GlcNAc...) asparagine glycan. A helical membrane pass occupies residues Ala239–Phe259. The Cytoplasmic portion of the chain corresponds to Cys260–Arg648. Thr300 carries the post-translational modification Phosphothreonine. Residues Phe303–Ala582 enclose the Protein kinase domain. Leu309 to Val317 is an ATP binding site. Thr326 bears the Phosphothreonine mark. Lys331 serves as a coordination point for ATP. Residues Ser384 and Ser387 each carry the phosphoserine modification. The Proton acceptor role is filled by Asp426. Residues Thr459, Thr460, and Thr465 each carry the phosphothreonine modification. Tyr473 is subject to Phosphotyrosine. Residue Ser475 is modified to Phosphoserine. Thr476 carries the phosphothreonine modification. Ser480 carries the post-translational modification Phosphoserine. Phosphothreonine is present on Thr555.

This sequence belongs to the protein kinase superfamily. Ser/Thr protein kinase family.

It localises to the cell membrane. The enzyme catalyses L-seryl-[protein] + ATP = O-phospho-L-seryl-[protein] + ADP + H(+). It catalyses the reaction L-threonyl-[protein] + ATP = O-phospho-L-threonyl-[protein] + ADP + H(+). The protein is Probable LRR receptor-like serine/threonine-protein kinase At4g30520 of Arabidopsis thaliana (Mouse-ear cress).